The primary structure comprises 387 residues: Mannitol-1-phosphate 5-dehydrogenase (387 aa).

3 to 14 (AVHFGAGNIGRG) contacts NAD(+).

This sequence belongs to the mannitol dehydrogenase family.

It carries out the reaction D-mannitol 1-phosphate + NAD(+) = beta-D-fructose 6-phosphate + NADH + H(+). The sequence is that of Mannitol-1-phosphate 5-dehydrogenase from Pseudarthrobacter chlorophenolicus (strain ATCC 700700 / DSM 12829 / CIP 107037 / JCM 12360 / KCTC 9906 / NCIMB 13794 / A6) (Arthrobacter chlorophenolicus).